The sequence spans 155 residues: MKIGLCAYSGYKIYPGHGKTMVKVDGKNFTFLNSKCEAAHLMRRNPRKVTWTVLYRRKFKKGQEEEQAKKRTRRTQKYQRAIVGASLSDIMAKRNMKPEVRKAQREQAIKQAKEQKKSTKASKKTTAPPTKGKAAPKAKAAKVSQKAAPRVGGKR.

Residues 92-155 (AKRNMKPEVR…KAAPRVGGKR (64 aa)) are disordered. Positions 96–117 (MKPEVRKAQREQAIKQAKEQKK) are enriched in basic and acidic residues. Positions 124–133 (KTTAPPTKGK) are enriched in low complexity.

It belongs to the eukaryotic ribosomal protein eL24 family.

The chain is Large ribosomal subunit protein eL24 (RpL24) from Plutella xylostella (Diamondback moth).